The sequence spans 507 residues: ATP synthase subunit alpha, chloroplastic (507 aa).

169–176 (IGDRQTGK) provides a ligand contact to ATP.

The protein belongs to the ATPase alpha/beta chains family. As to quaternary structure, F-type ATPases have 2 components, CF(1) - the catalytic core - and CF(0) - the membrane proton channel. CF(1) has five subunits: alpha(3), beta(3), gamma(1), delta(1), epsilon(1). CF(0) has four main subunits: a, b, b' and c.

Its subcellular location is the plastid. The protein resides in the chloroplast thylakoid membrane. It catalyses the reaction ATP + H2O + 4 H(+)(in) = ADP + phosphate + 5 H(+)(out). Produces ATP from ADP in the presence of a proton gradient across the membrane. The alpha chain is a regulatory subunit. This chain is ATP synthase subunit alpha, chloroplastic, found in Saccharum hybrid (Sugarcane).